We begin with the raw amino-acid sequence, 221 residues long: GTP cyclohydrolase III (221 aa).

This sequence belongs to the archaeal-type GTP cyclohydrolase family.

It catalyses the reaction GTP + 3 H2O = 2-amino-5-formylamino-6-(5-phospho-D-ribosylamino)pyrimidin-4(3H)-one + 2 phosphate + 2 H(+). Catalyzes the formation of 2-amino-5-formylamino-6-ribofuranosylamino-4(3H)-pyrimidinone ribonucleotide monophosphate and inorganic phosphate from GTP. Also has an independent pyrophosphate phosphohydrolase activity. This Pyrobaculum arsenaticum (strain DSM 13514 / JCM 11321 / PZ6) protein is GTP cyclohydrolase III.